The chain runs to 56 residues: Small ribosomal subunit protein uS14z/uS14y/uS14x (56 aa).

4 residues coordinate Zn(2+): Cys21, Cys24, Cys39, and Cys42.

The protein belongs to the universal ribosomal protein uS14 family. Requires Zn(2+) as cofactor.

The sequence is that of Small ribosomal subunit protein uS14z/uS14y/uS14x (RPS29A) from Arabidopsis thaliana (Mouse-ear cress).